Here is a 207-residue protein sequence, read N- to C-terminus: Protein GrpE (207 aa).

Residues 1–31 (MSEHQTPPEEDLTVANGDSAEAVSEPDVTVA) are disordered.

It belongs to the GrpE family. In terms of assembly, homodimer.

Its subcellular location is the cytoplasm. Functionally, participates actively in the response to hyperosmotic and heat shock by preventing the aggregation of stress-denatured proteins, in association with DnaK and GrpE. It is the nucleotide exchange factor for DnaK and may function as a thermosensor. Unfolded proteins bind initially to DnaJ; upon interaction with the DnaJ-bound protein, DnaK hydrolyzes its bound ATP, resulting in the formation of a stable complex. GrpE releases ADP from DnaK; ATP binding to DnaK triggers the release of the substrate protein, thus completing the reaction cycle. Several rounds of ATP-dependent interactions between DnaJ, DnaK and GrpE are required for fully efficient folding. This chain is Protein GrpE, found in Synechococcus elongatus (strain ATCC 33912 / PCC 7942 / FACHB-805) (Anacystis nidulans R2).